The primary structure comprises 553 residues: Dihydroxy-acid dehydratase 1 (553 aa).

Position 78 (aspartate 78) interacts with Mg(2+). Cysteine 119 is a binding site for [2Fe-2S] cluster. Residues aspartate 120 and lysine 121 each contribute to the Mg(2+) site. N6-carboxylysine is present on lysine 121. Cysteine 191 serves as a coordination point for [2Fe-2S] cluster. Glutamate 444 lines the Mg(2+) pocket. Serine 470 serves as the catalytic Proton acceptor.

Belongs to the IlvD/Edd family. In terms of assembly, homodimer. Requires [2Fe-2S] cluster as cofactor. It depends on Mg(2+) as a cofactor.

The catalysed reaction is (2R)-2,3-dihydroxy-3-methylbutanoate = 3-methyl-2-oxobutanoate + H2O. It carries out the reaction (2R,3R)-2,3-dihydroxy-3-methylpentanoate = (S)-3-methyl-2-oxopentanoate + H2O. The protein operates within amino-acid biosynthesis; L-isoleucine biosynthesis; L-isoleucine from 2-oxobutanoate: step 3/4. It functions in the pathway amino-acid biosynthesis; L-valine biosynthesis; L-valine from pyruvate: step 3/4. Functions in the biosynthesis of branched-chain amino acids. Catalyzes the dehydration of (2R,3R)-2,3-dihydroxy-3-methylpentanoate (2,3-dihydroxy-3-methylvalerate) into 2-oxo-3-methylpentanoate (2-oxo-3-methylvalerate) and of (2R)-2,3-dihydroxy-3-methylbutanoate (2,3-dihydroxyisovalerate) into 2-oxo-3-methylbutanoate (2-oxoisovalerate), the penultimate precursor to L-isoleucine and L-valine, respectively. The polypeptide is Dihydroxy-acid dehydratase 1 (Methanosarcina acetivorans (strain ATCC 35395 / DSM 2834 / JCM 12185 / C2A)).